A 237-amino-acid polypeptide reads, in one-letter code: 1-(5-phosphoribosyl)-5-[(5-phosphoribosylamino)methylideneamino] imidazole-4-carboxamide isomerase (237 aa).

D8 (proton acceptor) is an active-site residue. D129 (proton donor) is an active-site residue.

This sequence belongs to the HisA/HisF family.

It localises to the cytoplasm. The enzyme catalyses 1-(5-phospho-beta-D-ribosyl)-5-[(5-phospho-beta-D-ribosylamino)methylideneamino]imidazole-4-carboxamide = 5-[(5-phospho-1-deoxy-D-ribulos-1-ylimino)methylamino]-1-(5-phospho-beta-D-ribosyl)imidazole-4-carboxamide. It functions in the pathway amino-acid biosynthesis; L-histidine biosynthesis; L-histidine from 5-phospho-alpha-D-ribose 1-diphosphate: step 4/9. This Dehalococcoides mccartyi (strain ATCC BAA-2266 / KCTC 15142 / 195) (Dehalococcoides ethenogenes (strain 195)) protein is 1-(5-phosphoribosyl)-5-[(5-phosphoribosylamino)methylideneamino] imidazole-4-carboxamide isomerase.